A 187-amino-acid polypeptide reads, in one-letter code: Large ribosomal subunit protein uL10 (187 aa).

The protein belongs to the universal ribosomal protein uL10 family. In terms of assembly, part of the ribosomal stalk of the 50S ribosomal subunit. The N-terminus interacts with L11 and the large rRNA to form the base of the stalk. The C-terminus forms an elongated spine to which L12 dimers bind in a sequential fashion forming a multimeric L10(L12)X complex.

Functionally, forms part of the ribosomal stalk, playing a central role in the interaction of the ribosome with GTP-bound translation factors. This is Large ribosomal subunit protein uL10 from Synechococcus sp. (strain JA-2-3B'a(2-13)) (Cyanobacteria bacterium Yellowstone B-Prime).